An 874-amino-acid polypeptide reads, in one-letter code: Alanine--tRNA ligase (874 aa).

Zn(2+)-binding residues include His562, His566, Cys665, and His669.

Belongs to the class-II aminoacyl-tRNA synthetase family. It depends on Zn(2+) as a cofactor.

The protein localises to the cytoplasm. It catalyses the reaction tRNA(Ala) + L-alanine + ATP = L-alanyl-tRNA(Ala) + AMP + diphosphate. Its function is as follows. Catalyzes the attachment of alanine to tRNA(Ala) in a two-step reaction: alanine is first activated by ATP to form Ala-AMP and then transferred to the acceptor end of tRNA(Ala). Also edits incorrectly charged Ser-tRNA(Ala) and Gly-tRNA(Ala) via its editing domain. The chain is Alanine--tRNA ligase from Pseudomonas paraeruginosa (strain DSM 24068 / PA7) (Pseudomonas aeruginosa (strain PA7)).